A 239-amino-acid polypeptide reads, in one-letter code: DNA repair protein RecO (239 aa).

The protein belongs to the RecO family.

In terms of biological role, involved in DNA repair and RecF pathway recombination. The chain is DNA repair protein RecO from Tolumonas auensis (strain DSM 9187 / NBRC 110442 / TA 4).